The primary structure comprises 629 residues: Rho GTPase-activating protein conundrum (629 aa).

Residues proline 185–cysteine 294 form a required for interaction with Moe region. The interval serine 237–leucine 261 is disordered. Over residues arginine 240–serine 258 the composition is skewed to basic and acidic residues. One can recognise a Rho-GAP domain in the interval valine 359–phenylalanine 565.

Interacts with Moe (via FERM domain).

The protein resides in the cytoplasm. The protein localises to the cell membrane. It is found in the cell cortex. Its subcellular location is the cell junction. Functionally, GTPase-activating protein (GAP) for Rho1; functions with the ERM protein Moe to regulate Rho1 and control proliferation in the developing epithelium. Recruited by Moe to the cell cortex where it negatively regulates Rho1 activity. Can also promote cell proliferation independently of its GAP activity, perhaps by acting with Arf6 to positively regulate Rac1. This is Rho GTPase-activating protein conundrum from Drosophila melanogaster (Fruit fly).